The sequence spans 281 residues: Spermatogenesis-associated serine-rich protein 1 (281 aa).

Basic and acidic residues predominate over residues 1 to 14; the sequence is MEAARDAQHSDVLE. The interval 1–92 is disordered; the sequence is MEAARDAQHS…SSSAQANRSL (92 aa). Polar residues predominate over residues 21–37; the sequence is SRTSSHQNRRASLSSDG. Thr-53 carries the phosphothreonine modification. Over residues 54–65 the composition is skewed to polar residues; it reads PSDTASGLGQKT. A compositionally biased stretch (low complexity) spans 66–85; sequence SSTSSSSSSSSSSSPSSSSS. Phosphoserine is present on residues Ser-71, Ser-74, Ser-77, Ser-78, Ser-79, and Ser-91.

In terms of tissue distribution, detected in pachytene spermatocytes and round spermatids.

The sequence is that of Spermatogenesis-associated serine-rich protein 1 (Spats1) from Rattus norvegicus (Rat).